We begin with the raw amino-acid sequence, 154 residues long: Transcriptional repressor NrdR (154 aa).

The segment at 1-22 (MRCPFCGNDDTQVKDSRPTEDN) is disordered. Residues 3 to 34 (CPFCGNDDTQVKDSRPTEDNSAIRRRRFCPAC) fold into a zinc finger. The span at 11–22 (TQVKDSRPTEDN) shows a compositional bias: basic and acidic residues. Positions 49–139 (LTVVKSGGSR…VYKDFREVTD (91 aa)) constitute an ATP-cone domain.

The protein belongs to the NrdR family. It depends on Zn(2+) as a cofactor.

Negatively regulates transcription of bacterial ribonucleotide reductase nrd genes and operons by binding to NrdR-boxes. This chain is Transcriptional repressor NrdR, found in Rhodospirillum centenum (strain ATCC 51521 / SW).